A 398-amino-acid chain; its full sequence is 1-deoxy-D-xylulose 5-phosphate reductoisomerase (398 aa).

NADPH-binding residues include Thr-10, Gly-11, Ser-12, Ile-13, Asn-38, and Asn-124. Lys-125 is a binding site for 1-deoxy-D-xylulose 5-phosphate. Residue Glu-126 participates in NADPH binding. Asp-150 provides a ligand contact to Mn(2+). 4 residues coordinate 1-deoxy-D-xylulose 5-phosphate: Ser-151, Glu-152, Ser-176, and His-199. Residue Glu-152 coordinates Mn(2+). Gly-205 is a binding site for NADPH. The 1-deoxy-D-xylulose 5-phosphate site is built by Ser-212, Asn-217, Lys-218, and Glu-221. A Mn(2+)-binding site is contributed by Glu-221.

The protein belongs to the DXR family. Mg(2+) is required as a cofactor. Requires Mn(2+) as cofactor.

The enzyme catalyses 2-C-methyl-D-erythritol 4-phosphate + NADP(+) = 1-deoxy-D-xylulose 5-phosphate + NADPH + H(+). Its pathway is isoprenoid biosynthesis; isopentenyl diphosphate biosynthesis via DXP pathway; isopentenyl diphosphate from 1-deoxy-D-xylulose 5-phosphate: step 1/6. Catalyzes the NADPH-dependent rearrangement and reduction of 1-deoxy-D-xylulose-5-phosphate (DXP) to 2-C-methyl-D-erythritol 4-phosphate (MEP). The chain is 1-deoxy-D-xylulose 5-phosphate reductoisomerase from Crocosphaera subtropica (strain ATCC 51142 / BH68) (Cyanothece sp. (strain ATCC 51142)).